The primary structure comprises 3336 residues: Pericentrin (3336 aa).

Disordered regions lie at residues 1–71 (MEVE…DICK) and 81–100 (GAGG…KRED). The segment covering 27-37 (TKGDSSHSEKK) has biased composition (basic and acidic residues). Serine 44 carries the phosphoserine modification. Phosphoserine is present on serine 188. Threonine 191 carries the post-translational modification Phosphothreonine. The stretch at 258-553 (HTAQLELTQA…RLQGAREDAL (296 aa)) forms a coiled coil. The disordered stretch occupies residues 569-589 (KPEKGRKDHVDELEPERHKES). Residues serine 610 and serine 682 each carry the phosphoserine modification. 2 coiled-coil regions span residues 675–835 (TEHK…DALH) and 1010–1146 (TILT…MLKA). Serine 1245 is subject to Phosphoserine. Residues 1299–1949 (NEETAQVVRK…FLRCQVELDR (651 aa)) are a coiled coil. The tract at residues 1619–1638 (TLDAGRCPEPPSGSPPEGPE) is disordered. Pro residues predominate over residues 1626–1636 (PEPPSGSPPEG). A phosphoserine mark is found at serine 1653 and serine 1712. Positions 1954–1974 (RATAHTRVPGAHPQPRMDGGA) are disordered. Serine 2044 is modified (phosphoserine). A coiled-coil region spans residues 2064 to 2082 (VDLVAQVKQLQEKLNRLLY). The interval 2168 to 2214 (SLIPDEMPDSPIQEKSECQDMSLSSPTSVLGGSRHQSHTAEAGPRKS) is disordered. Residues serine 2177, serine 2192, serine 2225, serine 2226, and serine 2327 each carry the phosphoserine modification. Residues 2186-2197 (QDMSLSSPTSVL) show a composition bias toward polar residues. The segment at 2318 to 2374 (SFDSQETLSSPPPGLEGKADRSEKSDGSGFGARLSPGSGGPEAQTAGPVTPASISGR) is disordered. Residues 2334 to 2343 (GKADRSEKSD) are compositionally biased toward basic and acidic residues. Serine 2352, serine 2355, serine 2477, and serine 2486 each carry phosphoserine. Positions 2536 to 3086 (QEKLQHLRTA…EKLLKHHLQK (551 aa)) form a coiled coil. 2 disordered regions span residues 2875–2910 (LEQS…WRKW) and 3084–3126 (LQKG…EEAH). Composition is skewed to basic and acidic residues over residues 2876–2896 (EQSH…RSAE) and 3092–3102 (RSERSAWKPDE). Residues 2983-3246 (LSAARLLTSF…ARQPQSPPRT (264 aa)) are interaction with NEK2. A calmodulin-binding region spans residues 3195 to 3208 (RFRTAVRVVIAILR). Residues 3224–3300 (ALAQGKAPRP…RSLTASQDPE (77 aa)) are disordered. Residues 3226–3240 (AQGKAPRPGPRARQP) show a composition bias toward low complexity. Polar residues predominate over residues 3283–3297 (PSPNSRLERSLTASQ). Serine 3302 carries the phosphoserine modification.

As to quaternary structure, interacts with CHD3. Interacts with CHD4; the interaction regulates centrosome integrity. Interacts with DISC1 and PCM1. Binds calmodulin. Interacts with CDK5RAP2; the interaction is leading to centrosomal localization of PCNT and CDK5RAP2. Interacts with isoform 1 of NEK2. Interacts with CEP131. Interacts with CCDC13. Interacts with CEP68. Interacts with ATF5; the ATF5:PCNT:polyglutamylated tubulin (PGT) tripartite unites the mother centriole and the pericentriolar material (PCM) in the centrosome. Post-translationally, cleaved during mitotis which leads to removal of CDK5RAP2 from the centrosome and promotes centriole disengagement and subsequent centriole separation. The C-terminal fragment is rapidly degraded following cleavage. Ubiquitinated by TRIM43; leading to proteasomal degradation. Expressed in all tissues tested, including placenta, liver, kidney and thymus.

The protein resides in the cytoplasm. Its subcellular location is the cytoskeleton. It is found in the microtubule organizing center. The protein localises to the centrosome. Functionally, integral component of the filamentous matrix of the centrosome involved in the initial establishment of organized microtubule arrays in both mitosis and meiosis. Plays a role, together with DISC1, in the microtubule network formation. Is an integral component of the pericentriolar material (PCM). May play an important role in preventing premature centrosome splitting during interphase by inhibiting NEK2 kinase activity at the centrosome. The protein is Pericentrin (PCNT) of Homo sapiens (Human).